A 337-amino-acid chain; its full sequence is Heme A synthase (337 aa).

7 consecutive transmembrane segments (helical) span residues 3–23 (LARW…IGGI), 94–114 (VIGL…MIPA), 120–140 (LLAL…MVAS), 154–174 (LSAH…TALD), 191–211 (GVAW…AWVA), 248–268 (FLLH…LVVL), and 289–309 (TMVV…IAVA). H254 is a binding site for heme. H310 serves as a coordination point for heme. Residues 311 to 331 (QLTGALLVISTAWAAHAIGTA) form a helical membrane-spanning segment.

The protein belongs to the COX15/CtaA family. Type 2 subfamily. Interacts with CtaB. The cofactor is heme b.

The protein localises to the cell membrane. It catalyses the reaction Fe(II)-heme o + 2 A + H2O = Fe(II)-heme a + 2 AH2. It participates in porphyrin-containing compound metabolism; heme A biosynthesis; heme A from heme O: step 1/1. Its function is as follows. Catalyzes the conversion of heme O to heme A by two successive hydroxylations of the methyl group at C8. The first hydroxylation forms heme I, the second hydroxylation results in an unstable dihydroxymethyl group, which spontaneously dehydrates, resulting in the formyl group of heme A. This chain is Heme A synthase, found in Erythrobacter litoralis (strain HTCC2594).